The sequence spans 158 residues: NAD(P)H-quinone oxidoreductase subunit J, chloroplastic (158 aa).

This sequence belongs to the complex I 30 kDa subunit family. NDH is composed of at least 16 different subunits, 5 of which are encoded in the nucleus.

It localises to the plastid. It is found in the chloroplast thylakoid membrane. It catalyses the reaction a plastoquinone + NADH + (n+1) H(+)(in) = a plastoquinol + NAD(+) + n H(+)(out). The enzyme catalyses a plastoquinone + NADPH + (n+1) H(+)(in) = a plastoquinol + NADP(+) + n H(+)(out). In terms of biological role, NDH shuttles electrons from NAD(P)H:plastoquinone, via FMN and iron-sulfur (Fe-S) centers, to quinones in the photosynthetic chain and possibly in a chloroplast respiratory chain. The immediate electron acceptor for the enzyme in this species is believed to be plastoquinone. Couples the redox reaction to proton translocation, and thus conserves the redox energy in a proton gradient. The sequence is that of NAD(P)H-quinone oxidoreductase subunit J, chloroplastic from Draba nemorosa (Woodland whitlowgrass).